We begin with the raw amino-acid sequence, 144 residues long: Large ribosomal subunit protein uL15 (144 aa).

Positions 1-58 (MRLNELAPEPGSRPSAKRVGRGIGSGLGKTGGRGHKGLKSRSGGSVAPGFEGGQQPLA) are disordered. The segment covering 21-31 (RGIGSGLGKTG) has biased composition (gly residues).

The protein belongs to the universal ribosomal protein uL15 family. Part of the 50S ribosomal subunit.

Functionally, binds to the 23S rRNA. The protein is Large ribosomal subunit protein uL15 of Marinobacter nauticus (strain ATCC 700491 / DSM 11845 / VT8) (Marinobacter aquaeolei).